Here is a 147-residue protein sequence, read N- to C-terminus: MSEIPFWQSKTLDEMTDVQWESLCDGCGQCCLHKLMDEDSDEIYFTNVACKQLNIKTCQCRNYERRFEYEPDCIKLTRDNLPTFEWLPHTCAYRLLAEGKGLPTWHPLLTGSKVEMHGERISVRHIAVKESEVQDWEDHILNHPKRA.

Belongs to the UPF0260 family.

This Enterobacter sp. (strain 638) protein is UPF0260 protein Ent638_2368.